The following is a 425-amino-acid chain: Trigger factor (425 aa).

The PPIase FKBP-type domain occupies 163–248 (GDTAVIDFEG…VHEIKTKELP (86 aa)).

It belongs to the FKBP-type PPIase family. Tig subfamily.

Its subcellular location is the cytoplasm. The catalysed reaction is [protein]-peptidylproline (omega=180) = [protein]-peptidylproline (omega=0). Functionally, involved in protein export. Acts as a chaperone by maintaining the newly synthesized protein in an open conformation. Functions as a peptidyl-prolyl cis-trans isomerase. This Bacillus anthracis (strain A0248) protein is Trigger factor.